An 848-amino-acid polypeptide reads, in one-letter code: DNA mismatch repair protein MutS (848 aa).

605–612 is an ATP binding site; sequence GPNMAGKS.

This sequence belongs to the DNA mismatch repair MutS family.

In terms of biological role, this protein is involved in the repair of mismatches in DNA. It is possible that it carries out the mismatch recognition step. This protein has a weak ATPase activity. In Leptospira borgpetersenii serovar Hardjo-bovis (strain JB197), this protein is DNA mismatch repair protein MutS.